The following is a 178-amino-acid chain: Small ribosomal subunit protein uS7c (178 aa).

The segment covering 137-146 (QKKEEIEKSK) has biased composition (basic and acidic residues). The disordered stretch occupies residues 137–178 (QKKEEIEKSKSPVNNNKKFISKNKKSKNKKQKKRLKRKKNIY). The span at 155–178 (FISKNKKSKNKKQKKRLKRKKNIY) shows a compositional bias: basic residues.

It belongs to the universal ribosomal protein uS7 family. In terms of assembly, part of the 30S ribosomal subunit.

The protein resides in the plastid. One of the primary rRNA binding proteins, it binds directly to 16S rRNA where it nucleates assembly of the head domain of the 30S subunit. This Euglena longa (Euglenophycean alga) protein is Small ribosomal subunit protein uS7c (rps7).